The sequence spans 141 residues: Nucleoside diphosphate kinase (141 aa).

Residues Lys11, Phe59, Arg87, Thr93, Arg104, and Asn114 each contribute to the ATP site. The active-site Pros-phosphohistidine intermediate is the His117.

It belongs to the NDK family. Homotetramer. Mg(2+) is required as a cofactor.

It is found in the cytoplasm. It catalyses the reaction a 2'-deoxyribonucleoside 5'-diphosphate + ATP = a 2'-deoxyribonucleoside 5'-triphosphate + ADP. The enzyme catalyses a ribonucleoside 5'-diphosphate + ATP = a ribonucleoside 5'-triphosphate + ADP. Its function is as follows. Major role in the synthesis of nucleoside triphosphates other than ATP. The ATP gamma phosphate is transferred to the NDP beta phosphate via a ping-pong mechanism, using a phosphorylated active-site intermediate. In Paraburkholderia xenovorans (strain LB400), this protein is Nucleoside diphosphate kinase.